A 202-amino-acid polypeptide reads, in one-letter code: LexA repressor (202 aa).

The H-T-H motif DNA-binding region spans R28–K48. Active-site for autocatalytic cleavage activity residues include S123 and K160.

This sequence belongs to the peptidase S24 family. Homodimer.

It catalyses the reaction Hydrolysis of Ala-|-Gly bond in repressor LexA.. Functionally, represses a number of genes involved in the response to DNA damage (SOS response), including recA and lexA. In the presence of single-stranded DNA, RecA interacts with LexA causing an autocatalytic cleavage which disrupts the DNA-binding part of LexA, leading to derepression of the SOS regulon and eventually DNA repair. The chain is LexA repressor from Pseudomonas putida (Arthrobacter siderocapsulatus).